A 119-amino-acid polypeptide reads, in one-letter code: Ribosome-binding factor A (119 aa).

This sequence belongs to the RbfA family. Monomer. Binds 30S ribosomal subunits, but not 50S ribosomal subunits or 70S ribosomes.

Its subcellular location is the cytoplasm. Its function is as follows. One of several proteins that assist in the late maturation steps of the functional core of the 30S ribosomal subunit. Associates with free 30S ribosomal subunits (but not with 30S subunits that are part of 70S ribosomes or polysomes). Required for efficient processing of 16S rRNA. May interact with the 5'-terminal helix region of 16S rRNA. In Limosilactobacillus reuteri (strain DSM 20016) (Lactobacillus reuteri), this protein is Ribosome-binding factor A.